Reading from the N-terminus, the 306-residue chain is MNMLLEINDLNSYDIEFIFDTAIQHFNNSNVSNNSLYGKTIVNLFFESSTRTLSSFEISAKSLGAHTVTINVSTSSMNKGESIIDTVLNINAMNPDLIIIRSQYSQFIKEISKYLPNCHIINAGDGHHEHPTQALIDYCTIRYIKGKIHNLNISICGDILHSRVARSNIRLLSRYGANISIVAPPTLICNLKGVSHIHHNFVEGISDSDVIMLLRLQKERMTNFTISSEEEYAYLYMLNYENLSYARSDVIVMHPGPTNKGVEISHYVAEKKSIILLQVKMGVAVRKAILEYLLCHKLVKDMGNIT.

Carbamoyl phosphate contacts are provided by arginine 51 and threonine 52. Position 79 (lysine 79) interacts with L-aspartate. Carbamoyl phosphate-binding residues include arginine 101, histidine 130, and glutamine 133. L-aspartate-binding residues include arginine 163 and arginine 215. Glycine 256 and proline 257 together coordinate carbamoyl phosphate.

The protein belongs to the aspartate/ornithine carbamoyltransferase superfamily. ATCase family. In terms of assembly, heterododecamer (2C3:3R2) of six catalytic PyrB chains organized as two trimers (C3), and six regulatory PyrI chains organized as three dimers (R2).

The enzyme catalyses carbamoyl phosphate + L-aspartate = N-carbamoyl-L-aspartate + phosphate + H(+). Its pathway is pyrimidine metabolism; UMP biosynthesis via de novo pathway; (S)-dihydroorotate from bicarbonate: step 2/3. In terms of biological role, catalyzes the condensation of carbamoyl phosphate and aspartate to form carbamoyl aspartate and inorganic phosphate, the committed step in the de novo pyrimidine nucleotide biosynthesis pathway. This chain is Aspartate carbamoyltransferase catalytic subunit, found in Ehrlichia ruminantium (strain Welgevonden).